Consider the following 526-residue polypeptide: GMP synthase [glutamine-hydrolyzing] (526 aa).

A Glutamine amidotransferase type-1 domain is found at arginine 9–leucine 208. Cysteine 86 (nucleophile) is an active-site residue. Active-site residues include histidine 182 and glutamate 184. The region spanning tryptophan 209–arginine 401 is the GMPS ATP-PPase domain. Position 236–242 (serine 236–serine 242) interacts with ATP.

Homodimer.

The catalysed reaction is XMP + L-glutamine + ATP + H2O = GMP + L-glutamate + AMP + diphosphate + 2 H(+). It functions in the pathway purine metabolism; GMP biosynthesis; GMP from XMP (L-Gln route): step 1/1. In terms of biological role, catalyzes the synthesis of GMP from XMP. This Hahella chejuensis (strain KCTC 2396) protein is GMP synthase [glutamine-hydrolyzing].